The following is a 382-amino-acid chain: Mannitol-1-phosphate 5-dehydrogenase (382 aa).

3–14 (ALHFGAGNIGRG) contributes to the NAD(+) binding site. An N6-acetyllysine modification is found at Lys-269.

The protein belongs to the mannitol dehydrogenase family.

It catalyses the reaction D-mannitol 1-phosphate + NAD(+) = beta-D-fructose 6-phosphate + NADH + H(+). The polypeptide is Mannitol-1-phosphate 5-dehydrogenase (Escherichia coli O45:K1 (strain S88 / ExPEC)).